A 103-amino-acid chain; its full sequence is Urease subunit beta (103 aa).

Belongs to the urease beta subunit family. As to quaternary structure, heterotrimer of UreA (gamma), UreB (beta) and UreC (alpha) subunits. Three heterotrimers associate to form the active enzyme.

The protein localises to the cytoplasm. The catalysed reaction is urea + 2 H2O + H(+) = hydrogencarbonate + 2 NH4(+). It functions in the pathway nitrogen metabolism; urea degradation; CO(2) and NH(3) from urea (urease route): step 1/1. This is Urease subunit beta from Mycobacterium marinum (strain ATCC BAA-535 / M).